The sequence spans 637 residues: Anthranilate synthase, phenazine specific (637 aa).

The segment at 1–434 (MSQTAAHLME…QREQIQADFS (434 aa)) is anthranilate synthase component I. Residues 437 to 628 (QVLIVDAEDT…LRHALIHTPV (192 aa)) form the Glutamine amidotransferase type-1 domain. Active-site for GATase activity residues include cysteine 517, histidine 602, and glutamate 604.

It carries out the reaction chorismate + L-glutamine = anthranilate + pyruvate + L-glutamate + H(+). The protein operates within antibiotic biosynthesis; phenazine biosynthesis. Functionally, involved in the biosynthesis of the antibiotic, phenazine, a nitrogen-containing heterocyclic molecule having important roles in virulence, competition and biological control. This chain is Anthranilate synthase, phenazine specific (phzB), found in Pseudomonas chlororaphis (Pseudomonas aureofaciens).